The chain runs to 540 residues: MNNKDLKTKFIFITGGVVSSLGKGITAASIGQILKNRGLKVSIQKLDPYINIDPGTMSPYQHGEVFVTDDGAETDLDLGHYERFLDENMSKKSNVTAGQIYQSVINKEREGKYLGKTVQVIPHITEEIKQKLIDVALFHKSDVVIVEIGGTVGDIESSPFLEAIRQVRFDFGYHNVLYLHTTLVPYLKKAQEIKTKPTQHSVKELRALGIQPQILVLRSEVPINPETKNKIAALCDINPQAIFEALDVDILYQMILNLHHQGIDDFILQHFKLTNFSNADLQSWKQLITRIQNLEKKVVIALVGKYIVLHDAYLSIIEALKHASYQYNCKLEIKWIDAEKVTPDNISSLLEDYDGILVPYGFGNRAIEGKILAINYARTNNIPFFGICLGMQLAVIEYARNVLHLQGANSLEVDEKTPHPVITKKIVDSNLGGTLRLGSYPCHLKANTKSKAIYNQEIIYERHRHRFEMNPHYVALFEKNNDFVVSGINQEQKLCEIVELKSHPWFIAVQFHPEFLSRPLKPHPLFKGFVEASLLNQKNK.

Residues Met1–Leu273 are amidoligase domain. Ser19 contributes to the CTP binding site. Ser19 contributes to the UTP binding site. Residue Ser20–Ile25 participates in ATP binding. Position 60 (Tyr60) interacts with L-glutamine. Residue Asp77 coordinates ATP. Residues Asp77 and Glu147 each contribute to the Mg(2+) site. CTP contacts are provided by residues Asp154–Glu156, Lys194–Gln199, and Lys230. UTP-binding positions include Lys194–Gln199 and Lys230. Residues Tyr306–Asn539 form the Glutamine amidotransferase type-1 domain. Gly361 is an L-glutamine binding site. Catalysis depends on Cys388, which acts as the Nucleophile; for glutamine hydrolysis. L-glutamine is bound by residues Leu389 to Gln392, Glu412, and Arg466. Residues His512 and Glu514 contribute to the active site.

Belongs to the CTP synthase family. In terms of assembly, homotetramer.

The catalysed reaction is UTP + L-glutamine + ATP + H2O = CTP + L-glutamate + ADP + phosphate + 2 H(+). It catalyses the reaction L-glutamine + H2O = L-glutamate + NH4(+). It carries out the reaction UTP + NH4(+) + ATP = CTP + ADP + phosphate + 2 H(+). The protein operates within pyrimidine metabolism; CTP biosynthesis via de novo pathway; CTP from UDP: step 2/2. Allosterically activated by GTP, when glutamine is the substrate; GTP has no effect on the reaction when ammonia is the substrate. The allosteric effector GTP functions by stabilizing the protein conformation that binds the tetrahedral intermediate(s) formed during glutamine hydrolysis. Inhibited by the product CTP, via allosteric rather than competitive inhibition. Its function is as follows. Catalyzes the ATP-dependent amination of UTP to CTP with either L-glutamine or ammonia as the source of nitrogen. Regulates intracellular CTP levels through interactions with the four ribonucleotide triphosphates. This chain is CTP synthase, found in Onion yellows phytoplasma (strain OY-M).